A 476-amino-acid chain; its full sequence is Proline--tRNA ligase (476 aa).

It belongs to the class-II aminoacyl-tRNA synthetase family. ProS type 3 subfamily. Homodimer.

The protein localises to the cytoplasm. It carries out the reaction tRNA(Pro) + L-proline + ATP = L-prolyl-tRNA(Pro) + AMP + diphosphate. In terms of biological role, catalyzes the attachment of proline to tRNA(Pro) in a two-step reaction: proline is first activated by ATP to form Pro-AMP and then transferred to the acceptor end of tRNA(Pro). The polypeptide is Proline--tRNA ligase (Mycoplasmopsis pulmonis (strain UAB CTIP) (Mycoplasma pulmonis)).